Reading from the N-terminus, the 230-residue chain is Cell division ATP-binding protein FtsE (230 aa).

In terms of domain architecture, ABC transporter spans 3 to 228; that stretch reads ITLDHVTKQY…RDEQRGVYGM (226 aa). 37–44 serves as a coordination point for ATP; sequence GPSGSGKS.

The protein belongs to the ABC transporter superfamily. In terms of assembly, homodimer. Forms a membrane-associated complex with FtsX.

The protein resides in the cell membrane. In terms of biological role, part of the ABC transporter FtsEX involved in cellular division. Has ATPase activity. This Mycobacterium tuberculosis (strain ATCC 25618 / H37Rv) protein is Cell division ATP-binding protein FtsE.